The following is a 513-amino-acid chain: Serine/threonine-protein phosphatase T (513 aa).

TPR repeat units follow at residues Ala-12–Gln-45, Ser-46–Asn-79, and Ile-80–Asp-113. Residues Lys-188–Leu-513 are catalytic. Mn(2+) is bound by residues Asp-249, His-251, Asp-278, and Asn-310. The active-site Proton donor/acceptor is the His-311. Residues His-359 and His-434 each coordinate Mn(2+).

This sequence belongs to the PPP phosphatase family. PP-5 (PP-T) subfamily. In terms of assembly, interacts (via TPR repeats) with HSP82 (via C-terminal MEEVD pentapeptide). Mg(2+) serves as cofactor. Requires Mn(2+) as cofactor.

The protein localises to the nucleus. It carries out the reaction O-phospho-L-seryl-[protein] + H2O = L-seryl-[protein] + phosphate. It catalyses the reaction O-phospho-L-threonyl-[protein] + H2O = L-threonyl-[protein] + phosphate. With respect to regulation, stimulated by arachidonic acid and other unsaturated fatty acids, and by arachidoyl coenzyme A. Functionally, protein phosphatase that specifically binds to and dephosphorylates the molecular chaperone Hsp90 (HSC82 and HSP82). Dephosphorylation positively regulates the Hsp90 chaperone machinery. The polypeptide is Serine/threonine-protein phosphatase T (PPT1) (Saccharomyces cerevisiae (strain ATCC 204508 / S288c) (Baker's yeast)).